We begin with the raw amino-acid sequence, 1005 residues long: PH and SEC7 domain-containing protein 4 (1005 aa).

The disordered stretch occupies residues 27-66 (YPSEIHGHPGPSEPCQEHTCPFDPPESARPDAPHGNSGVE). Phosphoserine occurs at positions 85, 88, and 97. Disordered regions lie at residues 145 to 189 (PSKD…PGSS), 287 to 386 (LALG…NRGE), 407 to 525 (TSLL…SSSR), and 694 to 714 (EEDA…KISS). A compositionally biased stretch (acidic residues) spans 161 to 177 (EEDEDSGDDSSGPEEEN). Positions 350 to 361 (SQTSQSLSDLTQ) are enriched in low complexity. Phosphoserine occurs at positions 381 and 435. Residues 428 to 438 (PVSSQDSSPRV) show a composition bias toward low complexity. Basic and acidic residues-rich tracts occupy residues 453–465 (LQKD…SLKE) and 476–488 (QEAE…RSED). One can recognise an SEC7 domain in the interval 493 to 686 (QHHVHLASAE…KALYWSIRSE (194 aa)). Residues 726–841 (PTYKQGILAR…WIARINLAAA (116 aa)) form the PH domain. A coiled-coil region spans residues 870–926 (SSLEEQHRSHENCLDAASDDLLDLQRNLPERRGRSRELEEYRLRKEYLEHEKTRYET). The interval 951–1005 (KETDGSQEPRPSLKKSHSSPSLHQEEAPTTAKVKRNISERRTYRKIIPKRNRNQL) is disordered. Residues Ser968 and Ser971 each carry the phosphoserine modification. Over residues 992 to 1005 (TYRKIIPKRNRNQL) the composition is skewed to basic residues.

It is found in the cell membrane. It localises to the cell projection. The protein resides in the ruffle membrane. Guanine nucleotide exchange factor for ARF6 and ARL14/ARF7. Through ARL14 activation, controls the movement of MHC class II-containing vesicles along the actin cytoskeleton in dendritic cells. Involved in membrane recycling. Interacts with several phosphatidylinositol phosphate species, including phosphatidylinositol 3,4-bisphosphate, phosphatidylinositol 3,5-bisphosphate and phosphatidylinositol 4,5-bisphosphate. The protein is PH and SEC7 domain-containing protein 4 (Psd4) of Mus musculus (Mouse).